We begin with the raw amino-acid sequence, 202 residues long: Mevalonate-3-phosphate 5-kinase (202 aa).

The catalysed reaction is (R)-3-phosphomevalonate + ATP = (R)-3,5-bisphosphomevalonate + ADP + H(+). The protein operates within isoprenoid biosynthesis; isopentenyl diphosphate biosynthesis via mevalonate pathway. Its function is as follows. Phosphorylates mevalonate 3-phosphate to form mevalonate 3,5-bisphosphate. Functions in an alternative mevalonate pathway, only present in extreme acidophiles of the Thermoplasmatales order, which passes through mevalonate 3-phosphate rather than mevalonate 5-phosphate. The sequence is that of Mevalonate-3-phosphate 5-kinase from Thermoplasma acidophilum (strain ATCC 25905 / DSM 1728 / JCM 9062 / NBRC 15155 / AMRC-C165).